Consider the following 355-residue polypeptide: Probable F-box protein At5g36000 (355 aa).

Positions 1-14 (MNTRSGDAEGDIRG) are enriched in basic and acidic residues. Residues 1 to 44 (MNTRSGDAEGDIRGKMIAPVRDGNGGQKRKLVQSNDIQRDEDGG) are disordered. The region spanning 78–124 (QSRFSWYEQDIWTYITRFLDGKSLVKLGATNKWFYKIAMEDTVWRFA) is the F-box; degenerate domain.

In Arabidopsis thaliana (Mouse-ear cress), this protein is Probable F-box protein At5g36000.